Reading from the N-terminus, the 239-residue chain is 1-(5-phosphoribosyl)-5-[(5-phosphoribosylamino)methylideneamino] imidazole-4-carboxamide isomerase (239 aa).

Residue D8 is the Proton acceptor of the active site. The Proton donor role is filled by D129.

This sequence belongs to the HisA/HisF family.

It localises to the cytoplasm. The enzyme catalyses 1-(5-phospho-beta-D-ribosyl)-5-[(5-phospho-beta-D-ribosylamino)methylideneamino]imidazole-4-carboxamide = 5-[(5-phospho-1-deoxy-D-ribulos-1-ylimino)methylamino]-1-(5-phospho-beta-D-ribosyl)imidazole-4-carboxamide. The protein operates within amino-acid biosynthesis; L-histidine biosynthesis; L-histidine from 5-phospho-alpha-D-ribose 1-diphosphate: step 4/9. This is 1-(5-phosphoribosyl)-5-[(5-phosphoribosylamino)methylideneamino] imidazole-4-carboxamide isomerase from Bacillus thuringiensis subsp. konkukian (strain 97-27).